A 629-amino-acid polypeptide reads, in one-letter code: tRNA uridine 5-carboxymethylaminomethyl modification enzyme MnmG (629 aa).

13 to 18 is a binding site for FAD; the sequence is GGGHAG. 273–287 is a binding site for NAD(+); that stretch reads GPRYCPSIEDKIHRF.

It belongs to the MnmG family. As to quaternary structure, homodimer. Heterotetramer of two MnmE and two MnmG subunits. It depends on FAD as a cofactor.

It is found in the cytoplasm. Functionally, NAD-binding protein involved in the addition of a carboxymethylaminomethyl (cmnm) group at the wobble position (U34) of certain tRNAs, forming tRNA-cmnm(5)s(2)U34. This is tRNA uridine 5-carboxymethylaminomethyl modification enzyme MnmG from Shewanella denitrificans (strain OS217 / ATCC BAA-1090 / DSM 15013).